Here is a 614-residue protein sequence, read N- to C-terminus: UvrABC system protein C (614 aa).

In terms of domain architecture, GIY-YIG spans 14-91; the sequence is TSPGCYIHKD…IKENKPKYNI (78 aa). The UVR domain occupies 196–231; the sequence is NKIIDELKGKMAAAAQTMEFERAAEYRDLIQAIGTL. The interval 595–614 is disordered; that stretch reads LPQVAEERVDYQTEGNHNKP.

The protein belongs to the UvrC family. As to quaternary structure, interacts with UvrB in an incision complex.

Its subcellular location is the cytoplasm. The UvrABC repair system catalyzes the recognition and processing of DNA lesions. UvrC both incises the 5' and 3' sides of the lesion. The N-terminal half is responsible for the 3' incision and the C-terminal half is responsible for the 5' incision. In Streptococcus pneumoniae (strain Taiwan19F-14), this protein is UvrABC system protein C.